Here is a 215-residue protein sequence, read N- to C-terminus: Eukaryotic translation initiation factor 4E-1 (215 aa).

Positions Met-1–Ala-32 are disordered. The segment covering Glu-16 to Asp-27 has biased composition (acidic residues). EIF4G-binding stretches follow at residues His-40 to Glu-43 and Phe-50 to His-86. Residues Arg-58–Gly-63, Lys-90, and Trp-108–Glu-109 contribute to the mRNA site. Cysteines 113 and 151 form a disulfide. An EIF4G-binding region spans residues His-134 to Gln-143. MRNA contacts are provided by residues Arg-158–Arg-163 and Lys-203–Lys-207.

The protein belongs to the eukaryotic initiation factor 4E family. EIF4F is a multi-subunit complex, the composition of which varies with external and internal environmental conditions. It is composed of at least EIF4A, EIF4E and EIF4G. EIF4E is also known to interact with other partners. In higher plants two isoforms of EIF4F have been identified, named isoform EIF4F and isoform EIF(iso)4F. Isoform EIF4F has subunits p220 and p26, whereas isoform EIF(iso)4F has subunits p82 and p28. According to the redox status, the Cys-113-Cys-151 disulfide bridge may have a role in regulating protein function by affecting its ability to bind capped mRNA.

The protein localises to the nucleus. Its subcellular location is the cytoplasm. Its function is as follows. Component of the protein complex eIF4F, which is involved in the recognition of the mRNA cap, ATP-dependent unwinding of 5'-terminal secondary structure and recruitment of mRNA to the ribosome. Recognizes and binds the 7-methylguanosine-containing mRNA cap during an early step in the initiation of protein synthesis and facilitates ribosome binding by inducing the unwinding of the mRNAs secondary structures. The polypeptide is Eukaryotic translation initiation factor 4E-1 (Triticum aestivum (Wheat)).